A 1276-amino-acid polypeptide reads, in one-letter code: Sterol regulatory element-binding protein cleavage-activating protein (1276 aa).

The Cytoplasmic portion of the chain corresponds to 1-18; it reads MTLTERLREKISQAFYNH. The helical transmembrane segment at 19-39 threads the bilayer; that stretch reads GLLCASYPIPIILFTGLCILA. The Lumenal segment spans residues 40-279; sequence CCYPLLKLPL…NLVHVHFKEE (240 aa). The interval 46–284 is loop-1; the sequence is KLPLPGTGPV…HFKEEIGIAE (239 aa). The segment at 60–81 is disordered; that stretch reads PVKGYSPPPADSDHKQGEPSEQ. A glycan (N-linked (GlcNAc...) asparagine) is linked at N263. The helical transmembrane segment at 280-300 threads the bilayer; sequence IGIAELIPLVTTYIILFAYIY. One can recognise an SSD domain in the interval 284 to 442; that stretch reads ELIPLVTTYI…MLFFTTVLSI (159 aa). Residues 301 to 312 are Cytoplasmic-facing; that stretch reads FSTRKIDMVKSK. A helical membrane pass occupies residues 313–333; sequence WGLALAAVVTVLSSLLMSVGL. Residues 334-344 lie on the Lumenal side of the membrane; it reads CTLFGLTPTLN. The helical transmembrane segment at 345 to 365 threads the bilayer; it reads GGEIFPYLVVVIGLENVLVLT. Residues 366 to 401 are Cytoplasmic-facing; it reads KSVVSTPVDLEVKLRIAQGLSSESWSIMKNVATELG. Residues 402-422 form a helical membrane-spanning segment; that stretch reads IILIGYFTLVPAIQEFCLFAV. A topological domain (lumenal) is located at residue V423. A helical membrane pass occupies residues 424–444; it reads GLVSDFFLQMLFFTTVLSIDI. Residues 445-518 lie on the Cytoplasmic side of the membrane; that stretch reads RRMELADLNK…FLARTRLAQR (74 aa). The ER export signal signature appears at 447-452; sequence MELADL. Glycyl lysine isopeptide (Lys-Gly) (interchain with G-Cter in ubiquitin) cross-links involve residues K454 and K466. The helical transmembrane segment at 519–539 threads the bilayer; sequence LIMAGTVVWIGILVYTDPAGL. The tract at residues 535–710 is loop-7; the sequence is DPAGLRTYLA…QTHGDITLYK (176 aa). Over 540 to 707 the chain is Lumenal; the sequence is RTYLAAQVTE…GGTQTHGDIT (168 aa). N590 and N641 each carry an N-linked (GlcNAc...) asparagine glycan. Residues 708 to 728 traverse the membrane as a helical segment; sequence LYKVAALGLAAGIVLVLLLLC. Residues 729-1276 are Cytoplasmic-facing; it reads LYRVLCPRNY…YVPSVLEKLD (548 aa). Positions 731-1276 are interaction with SREBF2; sequence RVLCPRNYGQ…YVPSVLEKLD (546 aa). Residues 771–811 form a WD 1 repeat; it reads VLRGHLMDIECLASDGMLLVSCCLAGQVCVWDAQTGDCLTR. Residues S821, S837, S843, S850, S905, and S934 each carry the phosphoserine modification. The tract at residues 834 to 903 is disordered; it reads ERLSDGGKAS…RHRAGCGRSR (70 aa). Residues 928 to 958 are disordered; that stretch reads SALRPPSPGPPLPQASQEEGTAPEKGSPPLA. WD repeat units lie at residues 949–999 and 1002–1039; these read APEK…LCCS and EISS…SLSP. R1048 bears the Omega-N-methylarginine mark. 4 WD repeats span residues 1074–1111, 1114–1152, 1155–1192, and 1194–1232; these read AHQK…CLFT, GHSG…RVSH, AHRG…KLYS, and QQDL…LLQT.

Belongs to the WD repeat SCAP family. Membrane region forms a homotetramer. Component of the SCAP-SREBP complex (composed of SCAP and SREBF1/SREBP1 or SREBF2/SREBP2); interacts with SREBF1/SREBP1 or SREBF2/SREBP2 through its C-terminal cytoplasmic domain. Forms a ternary complex with INSIG1 or INSIG2 through its transmembrane domains at high sterol concentrations. Interacts with PAQR3; the interaction anchors the SCAP-SREBP complex to the Golgi apparatus in low cholesterol conditions. Interacts with the SEC23-SEC24 complex in a SAR1-GTP-dependent manner through an ER export signal in its third cytoplasmic loop. Interacts with RNF139; the interaction inhibits the interaction of SCAP with SEC24B and hampering the ER to Golgi transport of the SCAP-SREBP complex. Interacts with SPRING1. Post-translationally, ubiquitinated at Lys-454 and Lys-466. RNF145 triggers ubiquitination of SCAP, likely inhibiting SCAP-SREBP complex transport to the Golgi apparatus and the subsequent processing/maturation of SREBF2/SREBP2.

It is found in the endoplasmic reticulum membrane. Its subcellular location is the golgi apparatus membrane. The protein localises to the cytoplasmic vesicle. It localises to the COPII-coated vesicle membrane. Its function is as follows. Escort protein required for cholesterol as well as lipid homeostasis. Regulates export of the SCAP-SREBP complex from the endoplasmic reticulum to the Golgi upon low cholesterol, thereby regulating the processing of sterol regulatory element-binding proteins (SREBPs) SREBF1/SREBP1 and SREBF2/SREBP2. At high sterol concentrations, formation of a ternary complex with INSIG (INSIG1 or INSIG2) leads to mask the ER export signal in SCAP, promoting retention of the complex in the endoplasmic reticulum. Low sterol concentrations trigger release of INSIG, a conformational change in the SSD domain of SCAP, unmasking of the ER export signal, promoting recruitment into COPII-coated vesicles and transport of the SCAP-SREBP to the Golgi: in the Golgi, SREBPs are then processed, releasing the transcription factor fragment of SREBPs from the membrane, its import into the nucleus and up-regulation of LDLR, INSIG1 and the mevalonate pathway. Binds cholesterol via its SSD domain. This is Sterol regulatory element-binding protein cleavage-activating protein from Rattus norvegicus (Rat).